The following is a 369-amino-acid chain: tRNA 2-selenouridine synthase (369 aa).

A Rhodanese domain is found at 15 to 138 (FIAGQPLIDL…MRQYLIGVIE (124 aa)). Cys98 serves as the catalytic S-selanylcysteine intermediate.

The protein belongs to the SelU family. Monomer.

The catalysed reaction is 5-methylaminomethyl-2-thiouridine(34) in tRNA + selenophosphate + (2E)-geranyl diphosphate + H2O + H(+) = 5-methylaminomethyl-2-selenouridine(34) in tRNA + (2E)-thiogeraniol + phosphate + diphosphate. It carries out the reaction 5-methylaminomethyl-2-thiouridine(34) in tRNA + (2E)-geranyl diphosphate = 5-methylaminomethyl-S-(2E)-geranyl-thiouridine(34) in tRNA + diphosphate. The enzyme catalyses 5-methylaminomethyl-S-(2E)-geranyl-thiouridine(34) in tRNA + selenophosphate + H(+) = 5-methylaminomethyl-2-(Se-phospho)selenouridine(34) in tRNA + (2E)-thiogeraniol. It catalyses the reaction 5-methylaminomethyl-2-(Se-phospho)selenouridine(34) in tRNA + H2O = 5-methylaminomethyl-2-selenouridine(34) in tRNA + phosphate. Functionally, involved in the post-transcriptional modification of the uridine at the wobble position (U34) of tRNA(Lys), tRNA(Glu) and tRNA(Gln). Catalyzes the conversion of 2-thiouridine (S2U-RNA) to 2-selenouridine (Se2U-RNA). Acts in a two-step process involving geranylation of 2-thiouridine (S2U) to S-geranyl-2-thiouridine (geS2U) and subsequent selenation of the latter derivative to 2-selenouridine (Se2U) in the tRNA chain. This Shewanella sp. (strain MR-7) protein is tRNA 2-selenouridine synthase.